Here is a 145-residue protein sequence, read N- to C-terminus: Major pollen allergen Ole e 1 (145 aa).

Intrachain disulfides connect C19/C90, C22/C131, and C43/C78. A glycan (N-linked (GlcNAc...) (complex) asparagine; alternate) is linked at N111. The N-linked (GlcNAc...) (high mannose) asparagine; alternate glycan is linked to N111.

The protein belongs to the Ole e I family. Post-translationally, N-glycosylated; contains high mannose (Man(7)-GlcNAc) and partially fucosylated complex glycans (GlcNAc-Man(3)-Xyl-GlcNAc). Complex glycans may contribute to the antigenicity. Exists both in a glycosylated and in a non-glycosylated form. Ole e 1 and Ole e 1.0103 are the only non-glycosylated isoallergens. A second potential glycosylation site exists at position 50 in cv. Bella de Espana and cv. Hojiblanca. Expressed in tapetum and pollen grains. Not detected in petals, roots or leaves.

It is found in the endoplasmic reticulum. The protein resides in the secreted. May be involved in recognition between pollen-stigma and pollen tube-style cells. This is Major pollen allergen Ole e 1 from Olea europaea (Common olive).